A 101-amino-acid polypeptide reads, in one-letter code: Urease subunit beta (101 aa).

This sequence belongs to the urease beta subunit family. In terms of assembly, heterotrimer of UreA (gamma), UreB (beta) and UreC (alpha) subunits. Three heterotrimers associate to form the active enzyme.

Its subcellular location is the cytoplasm. It carries out the reaction urea + 2 H2O + H(+) = hydrogencarbonate + 2 NH4(+). Its pathway is nitrogen metabolism; urea degradation; CO(2) and NH(3) from urea (urease route): step 1/1. The polypeptide is Urease subunit beta (Psychromonas ingrahamii (strain DSM 17664 / CCUG 51855 / 37)).